A 576-amino-acid chain; its full sequence is Non-neuronal cytoplasmic intermediate filament protein (576 aa).

A disordered region spans residues 1–51 (MTSKISTTYEEEGRQSKIQPRAFVITRSGPSSKSSSFSARQSYASSRQSIT). A head region spans residues 2 to 75 (TSKISTTYEE…FRGTREKEKR (74 aa)). The segment covering 28–49 (SGPSSKSSSFSARQSYASSRQS) has biased composition (low complexity). The IF rod domain maps to 73–425 (EKREMQNLNE…KLLEGEESRV (353 aa)). Positions 76–108 (EMQNLNERLASYIEKVHFLDAQVKKLEAENEAL) are coil 1A. The linker 1 stretch occupies residues 109–122 (RNRKSESLQPIRDA). The segment at 123-260 (YENELAQARK…DLLDQLELLK (138 aa)) is coil 1B. The segment at 261 to 278 (PEPIQIKGMDYAEFWKSE) is linker 2. A coil 2 region spans residues 279-425 (LSKCVREIQS…KLLEGEESRV (147 aa)). The tract at residues 426–576 (GLRSLVEQAI…KATLIAKFSG (151 aa)) is tail. Residues 456–574 (GSMTIQRSSK…NEKATLIAKF (119 aa)) enclose the LTD domain.

It belongs to the intermediate filament family. In terms of assembly, can form homopolymers.

Its subcellular location is the cytoplasm. The sequence is that of Non-neuronal cytoplasmic intermediate filament protein from Cornu aspersum (Brown garden snail).